A 318-amino-acid polypeptide reads, in one-letter code: MFKNNLRFTSWINQHKFYQLDLSLKTRSIKQIVLTLVFKTLVLGFFGLIVIFPFYLMVVVSFASDERALDTRTPILWPDSWNFDNFSRVLSDGKYLNAIVVNTLVTVLSVLLTLFFTICMGYSFSLRKWKYKKLVWFFFLSVLILPESALLIGQYRIVIVANWNNPNSPLIVLGLIMPFVSSVFSGFMYRTSFEAIPSQLKESALIDGCNGFNYFLKIALPMVKSTSWTVGILTAFSAWNSYLWPLLLLGNRVDLNINLWVLQQGILDANSSDEQIRTLLNLKMSAAILAILPMFIIYFLFHKRIMNAIKNRANTIKG.

Transmembrane regions (helical) follow at residues 42–62 (VLGFFGLIVIFPFYLMVVVSF), 98–118 (AIVVNTLVTVLSVLLTLFFTI), 134–154 (LVWFFFLSVLILPESALLIGQ), 169–189 (PLIVLGLIMPFVSSVFSGFMY), 230–250 (VGILTAFSAWNSYLWPLLLLG), and 282–302 (LKMSAAILAILPMFIIYFLFH). An ABC transmembrane type-1 domain is found at 99–301 (IVVNTLVTVL…LPMFIIYFLF (203 aa)).

This sequence belongs to the binding-protein-dependent transport system permease family. MalFG subfamily.

It is found in the cell membrane. Its function is as follows. Probably part of a binding-protein-dependent transport system. Probably responsible for the translocation of the substrate across the membrane. The protein is Probable ABC transporter permease protein MG189 of Mycoplasma genitalium (strain ATCC 33530 / DSM 19775 / NCTC 10195 / G37) (Mycoplasmoides genitalium).